The primary structure comprises 136 residues: Large-conductance mechanosensitive channel (136 aa).

3 helical membrane-spanning segments follow: residues 15 to 35 (IDLA…NSIV), 38 to 58 (IFMP…MFIQ), and 80 to 100 (GHFI…FFFV).

The protein belongs to the MscL family. Homopentamer.

The protein localises to the cell inner membrane. Functionally, channel that opens in response to stretch forces in the membrane lipid bilayer. May participate in the regulation of osmotic pressure changes within the cell. This Bartonella tribocorum (strain CIP 105476 / IBS 506) protein is Large-conductance mechanosensitive channel.